The sequence spans 284 residues: Bifunctional protein FolD (284 aa).

Residues glycine 165–serine 167, serine 190, and valine 231 contribute to the NADP(+) site.

This sequence belongs to the tetrahydrofolate dehydrogenase/cyclohydrolase family. Homodimer.

It carries out the reaction (6R)-5,10-methylene-5,6,7,8-tetrahydrofolate + NADP(+) = (6R)-5,10-methenyltetrahydrofolate + NADPH. The catalysed reaction is (6R)-5,10-methenyltetrahydrofolate + H2O = (6R)-10-formyltetrahydrofolate + H(+). The protein operates within one-carbon metabolism; tetrahydrofolate interconversion. In terms of biological role, catalyzes the oxidation of 5,10-methylenetetrahydrofolate to 5,10-methenyltetrahydrofolate and then the hydrolysis of 5,10-methenyltetrahydrofolate to 10-formyltetrahydrofolate. The protein is Bifunctional protein FolD of Natranaerobius thermophilus (strain ATCC BAA-1301 / DSM 18059 / JW/NM-WN-LF).